The following is a 196-amino-acid chain: DnaA initiator-associating protein DiaA (196 aa).

The SIS domain occupies 34 to 196 (LVHSLLNGNK…DNTLFPHQDD (163 aa)).

It belongs to the SIS family. DiaA subfamily. In terms of assembly, homotetramer; dimer of dimers.

Functionally, required for the timely initiation of chromosomal replication via direct interactions with the DnaA initiator protein. The sequence is that of DnaA initiator-associating protein DiaA from Salmonella enteritidis PT4 (strain P125109).